The chain runs to 98 residues: NADH-ubiquinone oxidoreductase chain 4L (98 aa).

The next 3 membrane-spanning stretches (helical) occupy residues 2–22, 29–49, and 61–81; these read TQAS…TLIF, TLLC…MTAL, and IVML…LAMI.

This sequence belongs to the complex I subunit 4L family. In terms of assembly, core subunit of respiratory chain NADH dehydrogenase (Complex I) which is composed of 45 different subunits.

Its subcellular location is the mitochondrion inner membrane. The enzyme catalyses a ubiquinone + NADH + 5 H(+)(in) = a ubiquinol + NAD(+) + 4 H(+)(out). In terms of biological role, core subunit of the mitochondrial membrane respiratory chain NADH dehydrogenase (Complex I) which catalyzes electron transfer from NADH through the respiratory chain, using ubiquinone as an electron acceptor. Part of the enzyme membrane arm which is embedded in the lipid bilayer and involved in proton translocation. The sequence is that of NADH-ubiquinone oxidoreductase chain 4L (MT-ND4L) from Calomys musculinus (Drylands vesper mouse).